The chain runs to 268 residues: Type III pantothenate kinase (268 aa).

6–13 (DVGNTNIV) serves as a coordination point for ATP. Substrate is bound by residues Y100 and 107-110 (GADR). Catalysis depends on D109, which acts as the Proton acceptor. Residue D129 coordinates K(+). T132 contributes to the ATP binding site. A substrate-binding site is contributed by T184.

Belongs to the type III pantothenate kinase family. Homodimer. NH4(+) is required as a cofactor. It depends on K(+) as a cofactor.

It is found in the cytoplasm. The enzyme catalyses (R)-pantothenate + ATP = (R)-4'-phosphopantothenate + ADP + H(+). Its pathway is cofactor biosynthesis; coenzyme A biosynthesis; CoA from (R)-pantothenate: step 1/5. Its function is as follows. Catalyzes the phosphorylation of pantothenate (Pan), the first step in CoA biosynthesis. The sequence is that of Type III pantothenate kinase from Alkaliphilus metalliredigens (strain QYMF).